The sequence spans 76 residues: Acyl carrier protein (76 aa).

The Carrier domain maps to 1-76 (MATFDEVKEV…AAVDYIGSKQ (76 aa)). Serine 36 is subject to O-(pantetheine 4'-phosphoryl)serine.

It belongs to the acyl carrier protein (ACP) family. 4'-phosphopantetheine is transferred from CoA to a specific serine of apo-ACP by AcpS. This modification is essential for activity because fatty acids are bound in thioester linkage to the sulfhydryl of the prosthetic group.

The protein resides in the cytoplasm. The protein operates within lipid metabolism; fatty acid biosynthesis. Its function is as follows. Carrier of the growing fatty acid chain in fatty acid biosynthesis. In Deinococcus geothermalis (strain DSM 11300 / CIP 105573 / AG-3a), this protein is Acyl carrier protein.